The chain runs to 611 residues: Leukotriene A-4 hydrolase (611 aa).

Lys73 is modified (N6-acetyllysine). A peptide contacts are provided by residues 135-137 and 267-272; these read QCQ and PYGGME. His296 contributes to the Zn(2+) binding site. Glu297 (proton acceptor) is an active-site residue. Residues His300 and Glu319 each coordinate Zn(2+). At Lys337 the chain carries N6-acetyllysine. Tyr384 functions as the Proton donor in the catalytic mechanism. Residue Lys414 is modified to N6-acetyllysine. Position 416 is a phosphoserine (Ser416). 564–566 is a binding site for a peptide; sequence RMK. An N6-acetyllysine modification is found at Lys573.

It belongs to the peptidase M1 family. As to quaternary structure, monomer. Zn(2+) is required as a cofactor. In terms of processing, phosphorylation at Ser-416 inhibits leukotriene-A4 hydrolase activity.

The protein localises to the cytoplasm. The enzyme catalyses leukotriene A4 + H2O = leukotriene B4. It carries out the reaction (5S,6S)-epoxy-(18R)-hydroxy-(7E,9E,11Z,14Z,16E)-eicosapentaenoate + H2O = resolvin E1. It catalyses the reaction (5S,6S)-epoxy-(18S)-hydroxy-(7E,9E,11Z,14Z,16E)-eicosapentaenoate + H2O = 18S-resolvin E1. The catalysed reaction is Release of the N-terminal residue from a tripeptide.. It functions in the pathway lipid metabolism; leukotriene B4 biosynthesis. Its activity is regulated as follows. Inhibited by bestatin. The epoxide hydrolase activity is restrained by suicide inactivation that involves binding of LTA4 to Tyr-379. 4-(4-benzylphenyl)thiazol-2-amine (ARM1) selectively inhibits the epoxide hydrolase activity. Functionally, bifunctional zinc metalloenzyme that comprises both epoxide hydrolase (EH) and aminopeptidase activities. Acts as an epoxide hydrolase to catalyze the conversion of LTA4 to the pro-inflammatory mediator leukotriene B4 (LTB4). Also has aminopeptidase activity, with high affinity for N-terminal arginines of various synthetic tripeptides. In addition to its pro-inflammatory EH activity, may also counteract inflammation by its aminopeptidase activity, which inactivates by cleavage another neutrophil attractant, the tripeptide Pro-Gly-Pro (PGP), a bioactive fragment of collagen generated by the action of matrix metalloproteinase-9 (MMP9) and prolylendopeptidase (PREPL). Involved also in the biosynthesis of resolvin E1 and 18S-resolvin E1 from eicosapentaenoic acid, two lipid mediators that show potent anti-inflammatory and pro-resolving actions. This is Leukotriene A-4 hydrolase (Lta4h) from Mus musculus (Mouse).